The sequence spans 586 residues: YTH domain-containing family protein 2 (586 aa).

3 disordered regions span residues 98–128, 141–181, and 301–464; these read LKEKVKQSRALRQSVNNAAEQQPSTKPQPVQ, SQDQ…KESP, and QGLA…PLVS. Composition is skewed to polar residues over residues 107 to 128, 169 to 181, and 352 to 368; these read ALRQSVNNAAEQQPSTKPQPVQ, TLPTTPRTIKESP, and SSQAALSCKSKQSTDIQ. The span at 398 to 418 shows a compositional bias: basic residues; the sequence is CARRHRSSSPRGRSGSHKSRR. A compositionally biased stretch (polar residues) spans 421–436; sequence TDSPVSRSTTKSTPSR. Positions 435–576 constitute a YTH domain; it reads SRARQPGHRD…YCGRDLLRLM (142 aa). Positions 441-458 are enriched in basic and acidic residues; the sequence is GHRDYREYRDDRNRDTKP.

Belongs to the YTHDF family. YTHDF1 subfamily.

In terms of biological role, specifically recognizes and binds N6-methyladenosine (m6A)-containing mRNAs, and regulates their stability. M6A is a modification present at internal sites of mRNAs and some non-coding RNAs and plays a role in mRNA stability and processing. Plays a role in pathogenicity towards plant host. This is YTH domain-containing family protein 2 from Pyricularia oryzae (strain 70-15 / ATCC MYA-4617 / FGSC 8958) (Rice blast fungus).